We begin with the raw amino-acid sequence, 572 residues long: Proline--tRNA ligase (572 aa).

Belongs to the class-II aminoacyl-tRNA synthetase family. ProS type 1 subfamily. In terms of assembly, homodimer.

It is found in the cytoplasm. It catalyses the reaction tRNA(Pro) + L-proline + ATP = L-prolyl-tRNA(Pro) + AMP + diphosphate. In terms of biological role, catalyzes the attachment of proline to tRNA(Pro) in a two-step reaction: proline is first activated by ATP to form Pro-AMP and then transferred to the acceptor end of tRNA(Pro). As ProRS can inadvertently accommodate and process non-cognate amino acids such as alanine and cysteine, to avoid such errors it has two additional distinct editing activities against alanine. One activity is designated as 'pretransfer' editing and involves the tRNA(Pro)-independent hydrolysis of activated Ala-AMP. The other activity is designated 'posttransfer' editing and involves deacylation of mischarged Ala-tRNA(Pro). The misacylated Cys-tRNA(Pro) is not edited by ProRS. The polypeptide is Proline--tRNA ligase (Pectobacterium atrosepticum (strain SCRI 1043 / ATCC BAA-672) (Erwinia carotovora subsp. atroseptica)).